We begin with the raw amino-acid sequence, 164 residues long: Urocortin-3 (164 aa).

An N-terminal signal peptide occupies residues 1-23 (MLMPTYFLLPLLLLLGGPRTSLS). Positions 24 to 121 (HKFYNTGPVF…PDKPKSDRGT (98 aa)) are excised as a propeptide. Residues 58-120 (SFGHLPTQDP…YPDKPKSDRG (63 aa)) are disordered. Basic and acidic residues predominate over residues 110–120 (LYPDKPKSDRG). I160 is subject to Isoleucine amide.

This sequence belongs to the sauvagine/corticotropin-releasing factor/urotensin I family. Binds with high affinity to CRF receptors 2-alpha and 2-beta. Expressed in some areas of the brain including the hypothalamus, amygdala, and brainstem, but is not evident in the cerebellum, pituitary, or cerebral cortex; it is also expressed peripherally in small intestine and skin.

It is found in the secreted. Functionally, suppresses food intake, delays gastric emptying and decreases heat-induced edema. Might represent an endogenous ligand for maintaining homeostasis after stress. The chain is Urocortin-3 (Ucn3) from Mus musculus (Mouse).